The following is a 784-amino-acid chain: Transcriptional activator somA (784 aa).

Residues Met-43 to Leu-75 form the LisH domain. A compositionally biased stretch (polar residues) spans Leu-75–Ser-84. Disordered stretches follow at residues Leu-75–Ala-122, Gly-212–Leu-295, Met-424–Ile-726, and Gly-764–Leu-784. The segment covering Asp-103–Pro-117 has biased composition (basic and acidic residues). Positions Gln-215–Met-233 are enriched in low complexity. Over residues Gln-234–Gly-244 the composition is skewed to basic and acidic residues. Positions Pro-247–Pro-259 are enriched in low complexity. Residues Ser-453–Glu-467 are compositionally biased toward polar residues. The segment covering Gln-564–Ser-592 has biased composition (low complexity). Residues Arg-607–Asn-624 show a composition bias toward polar residues. A compositionally biased stretch (basic and acidic residues) spans Lys-629–Arg-638. 2 stretches are compositionally biased toward low complexity: residues Lys-644–Ser-661 and Pro-691–Ser-701. The span at Ala-702 to Asp-715 shows a compositional bias: pro residues.

This sequence belongs to the FLO8 family. As to quaternary structure, interacts with ptaB.

It localises to the nucleus. Functionally, transcription factor that controls the expression of genes related to the process of conidiation and adherence and regulates biofilm formation. Controls conidiation and adhesion primarily by affecting the expression of the three regulatory genes flbB, stuA and medA. Required for virulence in an egg and a mouse infection model. This chain is Transcriptional activator somA, found in Aspergillus fumigatus (strain ATCC MYA-4609 / CBS 101355 / FGSC A1100 / Af293) (Neosartorya fumigata).